The chain runs to 175 residues: Lipoprotein signal peptidase (175 aa).

4 helical membrane-spanning segments follow: residues 25-45, 56-76, 81-101, and 110-130; these read LWMAFALLVVVLDQFFKIVIV, VTGFFNLVLVYNKGAAFSFLA, WQRWFFTGLGIVVGAFIVWLL, and FCFAVSLILGGAVGNVIDRVV. Active-site residues include aspartate 136 and aspartate 154. Residues 146–166 traverse the membrane as a helical segment; it reads HWPAFNVADCAITVGAVLLIV.

This sequence belongs to the peptidase A8 family.

It is found in the cell inner membrane. The enzyme catalyses Release of signal peptides from bacterial membrane prolipoproteins. Hydrolyzes -Xaa-Yaa-Zaa-|-(S,diacylglyceryl)Cys-, in which Xaa is hydrophobic (preferably Leu), and Yaa (Ala or Ser) and Zaa (Gly or Ala) have small, neutral side chains.. It functions in the pathway protein modification; lipoprotein biosynthesis (signal peptide cleavage). This protein specifically catalyzes the removal of signal peptides from prolipoproteins. The sequence is that of Lipoprotein signal peptidase from Cupriavidus necator (strain ATCC 17699 / DSM 428 / KCTC 22496 / NCIMB 10442 / H16 / Stanier 337) (Ralstonia eutropha).